Reading from the N-terminus, the 209-residue chain is Protein-L-isoaspartate O-methyltransferase (209 aa).

Residue S60 is part of the active site.

It belongs to the methyltransferase superfamily. L-isoaspartyl/D-aspartyl protein methyltransferase family.

The protein localises to the cytoplasm. The catalysed reaction is [protein]-L-isoaspartate + S-adenosyl-L-methionine = [protein]-L-isoaspartate alpha-methyl ester + S-adenosyl-L-homocysteine. Functionally, catalyzes the methyl esterification of L-isoaspartyl residues in peptides and proteins that result from spontaneous decomposition of normal L-aspartyl and L-asparaginyl residues. It plays a role in the repair and/or degradation of damaged proteins. The sequence is that of Protein-L-isoaspartate O-methyltransferase from Photobacterium profundum (strain SS9).